Reading from the N-terminus, the 467-residue chain is Glutamate--tRNA ligase (467 aa).

The 'HIGH' region motif lies at 13–23 (PSPTGFLHLGG). Basic and acidic residues predominate over residues 118 to 133 (ARGDKPRYDGTWRPEP). Residues 118 to 141 (ARGDKPRYDGTWRPEPGKTLPAIP) are disordered. Positions 245-249 (KLSKR) match the 'KMSKS' region motif. Residue K248 participates in ATP binding.

This sequence belongs to the class-I aminoacyl-tRNA synthetase family. Glutamate--tRNA ligase type 1 subfamily. As to quaternary structure, monomer.

Its subcellular location is the cytoplasm. The catalysed reaction is tRNA(Glu) + L-glutamate + ATP = L-glutamyl-tRNA(Glu) + AMP + diphosphate. Its function is as follows. Catalyzes the attachment of glutamate to tRNA(Glu) in a two-step reaction: glutamate is first activated by ATP to form Glu-AMP and then transferred to the acceptor end of tRNA(Glu). The polypeptide is Glutamate--tRNA ligase (Bordetella avium (strain 197N)).